The sequence spans 446 residues: tRNA-2-methylthio-N(6)-dimethylallyladenosine synthase (446 aa).

The MTTase N-terminal domain occupies 5–121 (RRFYIQTFGC…LPSLIDDAAS (117 aa)). Cysteine 14, cysteine 50, cysteine 84, cysteine 157, cysteine 161, and cysteine 164 together coordinate [4Fe-4S] cluster. The region spanning 143-373 (REGRISAFIP…IDLQQEISAE (231 aa)) is the Radical SAM core domain. Residues 376–439 (RRQVGTVAEV…SATLSGSREG (64 aa)) form the TRAM domain.

Belongs to the methylthiotransferase family. MiaB subfamily. As to quaternary structure, monomer. The cofactor is [4Fe-4S] cluster.

Its subcellular location is the cytoplasm. It carries out the reaction N(6)-dimethylallyladenosine(37) in tRNA + (sulfur carrier)-SH + AH2 + 2 S-adenosyl-L-methionine = 2-methylsulfanyl-N(6)-dimethylallyladenosine(37) in tRNA + (sulfur carrier)-H + 5'-deoxyadenosine + L-methionine + A + S-adenosyl-L-homocysteine + 2 H(+). Functionally, catalyzes the methylthiolation of N6-(dimethylallyl)adenosine (i(6)A), leading to the formation of 2-methylthio-N6-(dimethylallyl)adenosine (ms(2)i(6)A) at position 37 in tRNAs that read codons beginning with uridine. The protein is tRNA-2-methylthio-N(6)-dimethylallyladenosine synthase of Chlorobium luteolum (strain DSM 273 / BCRC 81028 / 2530) (Pelodictyon luteolum).